We begin with the raw amino-acid sequence, 180 residues long: Endoribonuclease YbeY (180 aa).

The Zn(2+) site is built by His118, His122, and His128.

The protein belongs to the endoribonuclease YbeY family. Zn(2+) serves as cofactor.

It is found in the cytoplasm. Its function is as follows. Single strand-specific metallo-endoribonuclease involved in late-stage 70S ribosome quality control and in maturation of the 3' terminus of the 16S rRNA. This is Endoribonuclease YbeY from Rhodococcus jostii (strain RHA1).